Consider the following 374-residue polypeptide: Aminodeoxychorismate lyase (374 aa).

The protein belongs to the class-IV pyridoxal-phosphate-dependent aminotransferase family. In terms of assembly, homodimer. The cofactor is pyridoxal 5'-phosphate.

It is found in the cytoplasm. The enzyme catalyses 4-amino-4-deoxychorismate = 4-aminobenzoate + pyruvate + H(+). It participates in cofactor biosynthesis; tetrahydrofolate biosynthesis; 4-aminobenzoate from chorismate: step 2/2. Its function is as follows. Converts 4-amino-4-deoxychorismate into 4-aminobenzoate (PABA) and pyruvate. The protein is Aminodeoxychorismate lyase (ABZ2) of Saccharomyces cerevisiae (strain ATCC 204508 / S288c) (Baker's yeast).